Here is a 370-residue protein sequence, read N- to C-terminus: 3-isopropylmalate dehydrogenase (370 aa).

77-90 (GPKWDGVPYEHRPE) contacts NAD(+). Residues arginine 97, arginine 107, arginine 135, and aspartate 226 each contribute to the substrate site. Mg(2+)-binding residues include aspartate 226, aspartate 250, and aspartate 254. An NAD(+)-binding site is contributed by 290 to 302 (GSAPDIAGKSIAN).

The protein belongs to the isocitrate and isopropylmalate dehydrogenases family. LeuB type 1 subfamily. In terms of assembly, homodimer. Mg(2+) serves as cofactor. The cofactor is Mn(2+).

The protein resides in the cytoplasm. It catalyses the reaction (2R,3S)-3-isopropylmalate + NAD(+) = 4-methyl-2-oxopentanoate + CO2 + NADH. It functions in the pathway amino-acid biosynthesis; L-leucine biosynthesis; L-leucine from 3-methyl-2-oxobutanoate: step 3/4. Catalyzes the oxidation of 3-carboxy-2-hydroxy-4-methylpentanoate (3-isopropylmalate) to 3-carboxy-4-methyl-2-oxopentanoate. The product decarboxylates to 4-methyl-2 oxopentanoate. The chain is 3-isopropylmalate dehydrogenase (leuB) from Agrobacterium fabrum (strain C58 / ATCC 33970) (Agrobacterium tumefaciens (strain C58)).